We begin with the raw amino-acid sequence, 355 residues long: Phosphoribosylformylglycinamidine cyclo-ligase (355 aa).

The protein belongs to the AIR synthase family.

It is found in the cytoplasm. It carries out the reaction 2-formamido-N(1)-(5-O-phospho-beta-D-ribosyl)acetamidine + ATP = 5-amino-1-(5-phospho-beta-D-ribosyl)imidazole + ADP + phosphate + H(+). It functions in the pathway purine metabolism; IMP biosynthesis via de novo pathway; 5-amino-1-(5-phospho-D-ribosyl)imidazole from N(2)-formyl-N(1)-(5-phospho-D-ribosyl)glycinamide: step 2/2. In Paraburkholderia phytofirmans (strain DSM 17436 / LMG 22146 / PsJN) (Burkholderia phytofirmans), this protein is Phosphoribosylformylglycinamidine cyclo-ligase.